A 198-amino-acid polypeptide reads, in one-letter code: Recombination protein RecR (198 aa).

A C4-type zinc finger spans residues 57 to 72 (CSICGNLTDDDPCHIC). Residues 80–175 (ETILVVEASK…KVTRLARGLA (96 aa)) form the Toprim domain.

Belongs to the RecR family.

Functionally, may play a role in DNA repair. It seems to be involved in an RecBC-independent recombinational process of DNA repair. It may act with RecF and RecO. This Streptococcus equi subsp. zooepidemicus (strain MGCS10565) protein is Recombination protein RecR.